A 556-amino-acid chain; its full sequence is Hydroxylamine reductase (556 aa).

The [4Fe-4S] cluster site is built by C4, C7, C19, and C26. Residues H252, E276, C320, C407, C435, C460, E494, and K496 each coordinate hybrid [4Fe-2O-2S] cluster. A Cysteine persulfide modification is found at C407.

The protein belongs to the HCP family. It depends on [4Fe-4S] cluster as a cofactor. Hybrid [4Fe-2O-2S] cluster is required as a cofactor.

Its subcellular location is the cytoplasm. The catalysed reaction is A + NH4(+) + H2O = hydroxylamine + AH2 + H(+). Functionally, catalyzes the reduction of hydroxylamine to form NH(3) and H(2)O. The chain is Hydroxylamine reductase from Acidithiobacillus ferridurans.